Reading from the N-terminus, the 297-residue chain is Cytidine deaminase (297 aa).

2 consecutive CMP/dCMP-type deaminase domains span residues 50 to 170 (SDKE…FGPK) and 189 to 297 (ETES…YASL). A substrate-binding site is contributed by 91–93 (NME). Histidine 104 is a Zn(2+) binding site. Residue glutamate 106 is the Proton donor of the active site. Zn(2+) is bound by residues cysteine 131 and cysteine 134.

Belongs to the cytidine and deoxycytidylate deaminase family. As to quaternary structure, homodimer. Zn(2+) is required as a cofactor.

The catalysed reaction is cytidine + H2O + H(+) = uridine + NH4(+). It carries out the reaction 2'-deoxycytidine + H2O + H(+) = 2'-deoxyuridine + NH4(+). This enzyme scavenges exogenous and endogenous cytidine and 2'-deoxycytidine for UMP synthesis. In Aliivibrio fischeri (strain ATCC 700601 / ES114) (Vibrio fischeri), this protein is Cytidine deaminase.